Here is a 129-residue protein sequence, read N- to C-terminus: MTQPPTVAAVLAAHSRVVEVGIGARPDVAAALAERGCAVTATDIEACTVPETVRFVRDDVTDPERAVYEAADAVYALRCPPELQRAVVDVAGAVGAACYLTTLGGEPVVVPVSERRTVASGALFVARDA.

The protein belongs to the UPF0146 family.

This chain is UPF0146 protein VNG_2609C, found in Halobacterium salinarum (strain ATCC 700922 / JCM 11081 / NRC-1) (Halobacterium halobium).